The primary structure comprises 382 residues: Diphosphomevalonate decarboxylase ERG19 (382 aa).

Residues 22–25, arginine 78, 157–162, and threonine 213 contribute to the (R)-5-diphosphomevalonate site; these read YWGK and SGSACR.

Belongs to the diphosphomevalonate decarboxylase family. Homodimer.

It catalyses the reaction (R)-5-diphosphomevalonate + ATP = isopentenyl diphosphate + ADP + phosphate + CO2. It functions in the pathway isoprenoid biosynthesis; isopentenyl diphosphate biosynthesis via mevalonate pathway; isopentenyl diphosphate from (R)-mevalonate: step 3/3. Its function is as follows. Diphosphomevalonate decarboxylase; part of the second module of ergosterol biosynthesis pathway that includes the middle steps of the pathway. MVD1 converts diphosphomevalonate into isopentenyl diphosphate. The second module is carried out in the vacuole and involves the formation of farnesyl diphosphate, which is also an important intermediate in the biosynthesis of ubiquinone, dolichol, heme and prenylated proteins. Activity by the mevalonate kinase ERG12 (FG05912) first converts mevalonate into 5-phosphomevalonate. 5-phosphomevalonate is then further converted to 5-diphosphomevalonate by the phosphomevalonate kinase ERG8 (FG09764). The diphosphomevalonate decarboxylase ERG19 (FG10424) then produces isopentenyl diphosphate. The isopentenyl-diphosphate delta-isomerase IDI1 (FG09722) then catalyzes the 1,3-allylic rearrangement of the homoallylic substrate isopentenyl (IPP) to its highly electrophilic allylic isomer, dimethylallyl diphosphate (DMAPP). Finally the farnesyl diphosphate synthase ERG20 (FG06784) catalyzes the sequential condensation of isopentenyl pyrophosphate with dimethylallyl pyrophosphate, and then with the resultant geranylpyrophosphate to the ultimate product farnesyl pyrophosphate. The protein is Diphosphomevalonate decarboxylase ERG19 of Gibberella zeae (strain ATCC MYA-4620 / CBS 123657 / FGSC 9075 / NRRL 31084 / PH-1) (Wheat head blight fungus).